A 136-amino-acid polypeptide reads, in one-letter code: Protein PsiE (136 aa).

A run of 4 helical transmembrane segments spans residues 15–35 (ILQT…VVFL), 55–75 (YELV…ALIV), 82–102 (FHFP…RLII), and 108–128 (PLDV…LWLC).

This sequence belongs to the PsiE family.

The protein localises to the cell inner membrane. The chain is Protein PsiE from Escherichia coli O17:K52:H18 (strain UMN026 / ExPEC).